The following is a 269-amino-acid chain: Growth-regulating factor 11 (269 aa).

Residues 1 to 11 (MAAEGEAKKDS) are compositionally biased toward basic and acidic residues. A disordered region spans residues 1–71 (MAAEGEAKKD…GKEDVEEGGV (71 aa)). Residues 43–52 (GEAGGGGGGG) show a composition bias toward gly residues. Residues 58–68 (EEEEGKEDVEE) show a composition bias toward acidic residues. One can recognise a QLQ domain in the interval 114 to 149 (AFTAMQLQELEQQSRVYQYMAARVPVPTHLVFPIWK). A WRC domain is found at 180 to 224 (EPEPGRCRRTDGKKWRCWRNAIANEKYCERHMHRGRKRPVQLVVE). 2 short sequence motifs (bipartite nuclear localization signal) span residues 185–195 (RCRRTDGKKWR) and 213–217 (RGRKR). A disordered region spans residues 212 to 269 (HRGRKRPVQLVVEDDEPDSTSGSKPASGKATEGGKKTDDKSSSSKKLAVAAPAAVEST). Positions 243–253 (EGGKKTDDKSS) are enriched in basic and acidic residues. Over residues 255–269 (SKKLAVAAPAAVEST) the composition is skewed to low complexity.

It belongs to the GRF family.

It is found in the nucleus. Its function is as follows. Transcription activator that plays a regulatory role in gibberellin-induced stem elongation. The polypeptide is Growth-regulating factor 11 (GRF11) (Oryza sativa subsp. japonica (Rice)).